We begin with the raw amino-acid sequence, 396 residues long: Elongation factor Tu (396 aa).

Residues 11–205 enclose the tr-type G domain; the sequence is KPHVNIGTIG…VVDEYIPTPE (195 aa). The segment at 20–27 is G1; that stretch reads GHVDHGKT. Position 20-27 (20-27) interacts with GTP; the sequence is GHVDHGKT. A Mg(2+)-binding site is contributed by threonine 27. A G2 region spans residues 61-65; it reads GITIN. A G3 region spans residues 82–85; sequence DAPG. GTP-binding positions include 82–86 and 137–140; these read DAPGH and NKCD. A G4 region spans residues 137-140; that stretch reads NKCD. Positions 175-177 are G5; it reads SAL.

It belongs to the TRAFAC class translation factor GTPase superfamily. Classic translation factor GTPase family. EF-Tu/EF-1A subfamily. In terms of assembly, monomer.

The protein resides in the cytoplasm. It carries out the reaction GTP + H2O = GDP + phosphate + H(+). Functionally, GTP hydrolase that promotes the GTP-dependent binding of aminoacyl-tRNA to the A-site of ribosomes during protein biosynthesis. The protein is Elongation factor Tu of Lactobacillus delbrueckii subsp. bulgaricus (strain ATCC 11842 / DSM 20081 / BCRC 10696 / JCM 1002 / NBRC 13953 / NCIMB 11778 / NCTC 12712 / WDCM 00102 / Lb 14).